The sequence spans 444 residues: UDP-N-acetylglucosamine 1-carboxyvinyltransferase (444 aa).

22 to 23 (KN) is a binding site for phosphoenolpyruvate. Residue Arg94 coordinates UDP-N-acetyl-alpha-D-glucosamine. Residue Asp119 is the Proton donor of the active site. 2 residues coordinate UDP-N-acetyl-alpha-D-glucosamine: Asp309 and Val331.

Belongs to the EPSP synthase family. MurA subfamily.

It localises to the cytoplasm. It carries out the reaction phosphoenolpyruvate + UDP-N-acetyl-alpha-D-glucosamine = UDP-N-acetyl-3-O-(1-carboxyvinyl)-alpha-D-glucosamine + phosphate. Its pathway is cell wall biogenesis; peptidoglycan biosynthesis. Cell wall formation. Adds enolpyruvyl to UDP-N-acetylglucosamine. The protein is UDP-N-acetylglucosamine 1-carboxyvinyltransferase of Chlamydia abortus (strain DSM 27085 / S26/3) (Chlamydophila abortus).